The chain runs to 247 residues: 5'-nucleotidase SurE (247 aa).

Aspartate 8, aspartate 9, serine 39, and asparagine 91 together coordinate a divalent metal cation.

It belongs to the SurE nucleotidase family. A divalent metal cation is required as a cofactor.

It is found in the cytoplasm. The enzyme catalyses a ribonucleoside 5'-phosphate + H2O = a ribonucleoside + phosphate. In terms of biological role, nucleotidase that shows phosphatase activity on nucleoside 5'-monophosphates. The polypeptide is 5'-nucleotidase SurE (Methylobacillus flagellatus (strain ATCC 51484 / DSM 6875 / VKM B-1610 / KT)).